The sequence spans 117 residues: Hydrogenase maturation factor HypA (117 aa).

Ni(2+) is bound at residue His-2. Residues Cys-73, Cys-76, Cys-92, and Cys-95 each contribute to the Zn(2+) site.

It belongs to the HypA/HybF family.

Functionally, involved in the maturation of [NiFe] hydrogenases. Required for nickel insertion into the metal center of the hydrogenase. The polypeptide is Hydrogenase maturation factor HypA (Solidesulfovibrio magneticus (strain ATCC 700980 / DSM 13731 / RS-1) (Desulfovibrio magneticus)).